Consider the following 268-residue polypeptide: MERYESLFAQLKERKEGAFVPFVTLGDPGIEQSLKIIDTLIEAGADALELGIPFSDPLADGPTIQNATLRAFAAGVTPAQCFEVLALIRQKHPTIPIGLLMYANLVFNKGIDEFYAECEKVGVDSVLVADVPVEESAPFRQAALRHNVAPIFICPPNADDDLLRQIASYGRGYTYLLSRAGVTGAENRAALPLNHLVAKLKEYNAAPPLQGFGISAPDQVKAAIDAGAAGAISGSAIVKIIEQHINEPEKMLAALKAFVQPMKAATRR.

Residues glutamate 49 and aspartate 60 each act as proton acceptor in the active site.

This sequence belongs to the TrpA family. Tetramer of two alpha and two beta chains.

It carries out the reaction (1S,2R)-1-C-(indol-3-yl)glycerol 3-phosphate + L-serine = D-glyceraldehyde 3-phosphate + L-tryptophan + H2O. It participates in amino-acid biosynthesis; L-tryptophan biosynthesis; L-tryptophan from chorismate: step 5/5. Functionally, the alpha subunit is responsible for the aldol cleavage of indoleglycerol phosphate to indole and glyceraldehyde 3-phosphate. The protein is Tryptophan synthase alpha chain of Escherichia coli O127:H6 (strain E2348/69 / EPEC).